Reading from the N-terminus, the 185-residue chain is Lysozyme g (185 aa).

Residue glutamine 1 is modified to Pyrrolidone carboxylic acid. 2 disulfides stabilise this stretch: cysteine 4–cysteine 60 and cysteine 18–cysteine 29. Catalysis depends on residues glutamate 73 and aspartate 86.

The protein belongs to the glycosyl hydrolase 23 family.

The protein localises to the secreted. The enzyme catalyses Hydrolysis of (1-&gt;4)-beta-linkages between N-acetylmuramic acid and N-acetyl-D-glucosamine residues in a peptidoglycan and between N-acetyl-D-glucosamine residues in chitodextrins.. The protein is Lysozyme g of Casuarius casuarius (Southern cassowary).